We begin with the raw amino-acid sequence, 211 residues long: Degradation in the endoplasmic reticulum protein 1 (211 aa).

The residue at position 1 (methionine 1) is an N-acetylmethionine. The Cytoplasmic portion of the chain corresponds to 1 to 14; sequence MDAVILNLLGDIPL. A helical transmembrane segment spans residues 15–32; the sequence is VTRLWTIGCLVLSGLTSL. Over 33–67 the chain is Lumenal; that stretch reads RIVDPGKVVYSYDLVFKKGQYGRLLYSIFDYGAFN. The chain crosses the membrane as a helical span at residues 68-85; that stretch reads WISMINIFVSANHLSTLE. Residues 86 to 92 are Cytoplasmic-facing; it reads NSFNLRR. Residues 93–109 form a helical membrane-spanning segment; that stretch reads KFCWIIFLLLVILVKMT. Topologically, residues 110–117 are lumenal; that stretch reads SIEQPAAS. A helical transmembrane segment spans residues 118–133; it reads LGVLLHENLVYYELKK. At 134 to 149 the chain is on the cytoplasmic side; it reads NGNQMNVRFFGAIDVS. Residues 150-165 traverse the membrane as a helical segment; the sequence is PSIFPIYMNAVMYFVY. Residues 166–168 are Lumenal-facing; it reads KRS. Residues 169 to 189 traverse the membrane as a helical segment; it reads WLEIAMNFMPGHVIYYMDDII. Over 190 to 211 the chain is Cytoplasmic; sequence GKIYGIDLCKSPYDWFRNTETP.

It belongs to the derlin family. Component of the HRD1 ubiquitin ligase complex which contains the E3 ligase HRD1, its cofactors HRD3, USA1 and DER1, substrate recruiting factor YOS9 and CDC48-binding protein UBX2. Within the complex, interacts with USA1 (via C-terminus). In ERAD-L, HRD3 and YOS9 jointly bind misfolded glycoproteins in the endoplasmic reticulum (ER) lumen. Movement of ERAD-L substrates through the ER membrane is facilitated by HRD1 and DER1 which have lateral gates facing each other and which distort the membrane region between the lateral gates, making it much thinner than a normal phospholipid bilayer. Substrates insert into the membrane as a hairpin loop with one strand interacting with DER1 and the other with HRD1. The HRD1 complex interacts with the heterotrimeric CDC48-NPL4-UFD1 ATPase complex which is recruited by UBX2 via its interaction with CDC48 and which moves ubiquitinated substrates to the cytosol for targeting to the proteasome. In terms of processing, N-terminally acetylated by acetyltransferase NatB which enhances DER1 stability and is required for ERAD-L function.

It localises to the endoplasmic reticulum membrane. Functionally, component of the endoplasmic reticulum-associated degradation (ERAD) pathway. Specifically required for the ERAD-L pathway which mediates the degradation of proteins with misfolded lumenal domains within the endoplasmic reticulum (ER). Facilitates retrotranslocation of misfolded proteins from the ER lumen through the ER membrane in conjunction with HRD1. Both proteins have lateral gates facing each other and distort the membrane region between the lateral gates, making it much thinner than a normal phospholipid bilayer. Substrates insert into the membrane as a hairpin loop with one strand interacting with DER1 and the other with HRD1. The protein is Degradation in the endoplasmic reticulum protein 1 (DER1) of Saccharomyces cerevisiae (strain ATCC 204508 / S288c) (Baker's yeast).